The sequence spans 318 residues: Homoserine kinase (318 aa).

97-107 serves as a coordination point for ATP; that stretch reads PIGSGLGSSAC.

Belongs to the GHMP kinase family. Homoserine kinase subfamily.

It is found in the cytoplasm. The catalysed reaction is L-homoserine + ATP = O-phospho-L-homoserine + ADP + H(+). It participates in amino-acid biosynthesis; L-threonine biosynthesis; L-threonine from L-aspartate: step 4/5. Functionally, catalyzes the ATP-dependent phosphorylation of L-homoserine to L-homoserine phosphate. The protein is Homoserine kinase of Aliivibrio fischeri (strain MJ11) (Vibrio fischeri).